Reading from the N-terminus, the 265-residue chain is Aquaporin-5 (265 aa).

The Cytoplasmic segment spans residues 1 to 12 (MKKEVCSVAFFK). The helical transmembrane segment at 13–33 (AVFAEFLATLIFVFFGLGSAL) threads the bilayer. Residues 34 to 39 (KWPSAL) are Extracellular-facing. Residues 40 to 60 (PTILQISIAFGLAIGTLAQAL) form a helical membrane-spanning segment. The Cytoplasmic segment spans residues 61–65 (GPVSG). The segment at residues 66-74 (GHINPAITL) is an intramembrane region (discontinuously helical). The NPA 1 motif lies at 69–71 (NPA). Topologically, residues 75–87 (ALLIGNQISLLRA) are cytoplasmic. A helical membrane pass occupies residues 88 to 108 (IFYVAAQLVGAIAGAGILYWL). At 109-126 (APGNARGNLAVNALSNNT) the chain is on the extracellular side. Residue asparagine 124 is glycosylated (N-linked (GlcNAc...) asparagine). The helical transmembrane segment at 127 to 147 (TPGKAVVVELILTFQLALCIF) threads the bilayer. Over 148-158 (SSTDSRRTSPV) the chain is Cytoplasmic. The chain crosses the membrane as a helical span at residues 159–179 (GSPALSIGLSVTLGHLVGIYF). Position 180 (threonine 180) is a topological domain, extracellular. The segment at residues 181–191 (GCSMNPARSFG) is an intramembrane region (discontinuously helical). The short motif at 185 to 187 (NPA) is the NPA 2 element. The Extracellular portion of the chain corresponds to 192 to 203 (PAVVMNRFSPSH). The helical transmembrane segment at 204 to 224 (WVFWVGPIVGAVLAAILYFYL) threads the bilayer. At 225–265 (LFPSSLSLHDRVAVVKGTYEPEEDWEDHREERKKTIELTAH) the chain is on the cytoplasmic side.

Belongs to the MIP/aquaporin (TC 1.A.8) family. As to quaternary structure, homotetramer; each monomer provides an independent water pore. Interacts with TRPV4; the interaction is probably indirect and regulates TRPV4 activation by hypotonicity. As to expression, detected at the luminal membrane of secretory epithelial cells in hindpaw sweat glands. Detected in acinar cells in salivary glands, in duct cells in lacrimal glands and in lung (at protein level). Detected in lung, parotid, submandibular, sublingual, and lacrimal gland tissues.

It is found in the apical cell membrane. It localises to the cell membrane. The protein localises to the cytoplasmic vesicle membrane. The catalysed reaction is H2O(in) = H2O(out). Functionally, aquaporins form homotetrameric transmembrane channels, with each monomer independently mediating water transport across the plasma membrane along its osmotic gradient. Plays an important role in fluid secretion in salivary glands. Required for TRPV4 activation by hypotonicity. Together with TRPV4, controls regulatory volume decrease in salivary epithelial cells. Seems to play a redundant role in water transport in the eye, lung and in sweat glands. The chain is Aquaporin-5 from Mus musculus (Mouse).